A 204-amino-acid polypeptide reads, in one-letter code: MTNITVLEQLMQSFLSEYTFSNRDYFQIKSEPPKFDPDIILSKTFQNKYGICMDLNYAFSHVLKKHGFNCYLVKAFEKKSDGQFYDIYHLTIIVIINGCKYLADVGFGKYFSKPVILKNGVTVDKIRVEVPNMKNNENIYNILSHNKFIVQIKDSPLLSISDINDNYQNFFKAGPYDLPLCRKPYDRIYDQKVGDYIIPQKVEK.

C52 functions as the Acyl-thioester intermediate in the catalytic mechanism. Catalysis depends on residues H89 and D104.

Belongs to the arylamine N-acetyltransferase family.

This is an uncharacterized protein from Acanthamoeba polyphaga mimivirus (APMV).